The sequence spans 254 residues: NH(3)-dependent NAD(+) synthetase (254 aa).

32–39 (GISGGIDS) is an ATP binding site. Aspartate 38 provides a ligand contact to Mg(2+). Arginine 113 contributes to the deamido-NAD(+) binding site. Threonine 133 is an ATP binding site. Glutamate 138 contributes to the Mg(2+) binding site. The deamido-NAD(+) site is built by lysine 146 and aspartate 153. Residues lysine 162 and threonine 184 each contribute to the ATP site. A deamido-NAD(+)-binding site is contributed by 244–245 (HK).

It belongs to the NAD synthetase family. In terms of assembly, homodimer.

The catalysed reaction is deamido-NAD(+) + NH4(+) + ATP = AMP + diphosphate + NAD(+) + H(+). The protein operates within cofactor biosynthesis; NAD(+) biosynthesis; NAD(+) from deamido-NAD(+) (ammonia route): step 1/1. Its function is as follows. Catalyzes the ATP-dependent amidation of deamido-NAD to form NAD. Uses ammonia as a nitrogen source. The sequence is that of NH(3)-dependent NAD(+) synthetase from Thermococcus kodakarensis (strain ATCC BAA-918 / JCM 12380 / KOD1) (Pyrococcus kodakaraensis (strain KOD1)).